Reading from the N-terminus, the 174-residue chain is Gamma-crystallin C (174 aa).

2 Beta/gamma crystallin 'Greek key' domains span residues G2 to S40 and G41 to P83. C23 carries the post-translational modification S-methylcysteine. A connecting peptide region spans residues Q84–S87. Beta/gamma crystallin 'Greek key' domains are found at residues H88–E128 and G129–V171.

Belongs to the beta/gamma-crystallin family. In terms of assembly, monomer.

Its function is as follows. Crystallins are the dominant structural components of the vertebrate eye lens. The protein is Gamma-crystallin C (CRYGC) of Canis lupus familiaris (Dog).